We begin with the raw amino-acid sequence, 950 residues long: Serine/threonine-protein kinase 10-A (950 aa).

The Protein kinase domain maps to 36–294; that stretch reads WEIIGELGDG…AAQLLEHPFV (259 aa). Residues 42–50 and Lys65 each bind ATP; that span reads LGDGAFGKV. Asp157 serves as the catalytic Proton acceptor. Acidic residues predominate over residues 319–331; it reads EEQGEAEEEEDSD. The tract at residues 319–478 is disordered; it reads EEQGEAEEEE…DSGSNSASES (160 aa). A compositionally biased stretch (basic and acidic residues) spans 347–356; that stretch reads EIGKDIEREQ. Residues 365-382 are compositionally biased toward polar residues; it reads SATSPQKTDSQADNYSQR. Over residues 416–432 the composition is skewed to basic and acidic residues; that stretch reads EPKRNSTAESYRGEEHS. The segment covering 433 to 445 has biased composition (low complexity); that stretch reads SASSQRQRSAQSA. Polar residues predominate over residues 452–463; that stretch reads SFDSPTRYFTNW. Phosphoserine; by PLK1 occurs at positions 482, 486, and 490. A coiled-coil region spans residues 634 to 786; that stretch reads IKFLEQLKLR…QLRLRQQQEK (153 aa).

This sequence belongs to the protein kinase superfamily. STE Ser/Thr protein kinase family. STE20 subfamily. In terms of assembly, homodimer. In terms of processing, autophosphorylates. Phosphorylated by plk1/plx1, suggesting the existence of a feedback loop with plk1/plx1. activation of the protein.

It is found in the cell membrane. The enzyme catalyses L-seryl-[protein] + ATP = O-phospho-L-seryl-[protein] + ADP + H(+). The catalysed reaction is L-threonyl-[protein] + ATP = O-phospho-L-threonyl-[protein] + ADP + H(+). Its function is as follows. May act as a polo kinase kinase by mediating phosphorylation of plk1/plx1 and subsequent activation of plk1/plx1 during oocyte maturation. The polypeptide is Serine/threonine-protein kinase 10-A (stk10-a) (Xenopus laevis (African clawed frog)).